We begin with the raw amino-acid sequence, 202 residues long: Imidazole glycerol phosphate synthase subunit HisH (202 aa).

The Glutamine amidotransferase type-1 domain maps to 3–202; that stretch reads RIVILDYGLG…KILKNFVDMC (200 aa). Catalysis depends on Cys79, which acts as the Nucleophile. Active-site residues include His183 and Glu185.

In terms of assembly, heterodimer of HisH and HisF.

The protein localises to the cytoplasm. The enzyme catalyses 5-[(5-phospho-1-deoxy-D-ribulos-1-ylimino)methylamino]-1-(5-phospho-beta-D-ribosyl)imidazole-4-carboxamide + L-glutamine = D-erythro-1-(imidazol-4-yl)glycerol 3-phosphate + 5-amino-1-(5-phospho-beta-D-ribosyl)imidazole-4-carboxamide + L-glutamate + H(+). The catalysed reaction is L-glutamine + H2O = L-glutamate + NH4(+). It functions in the pathway amino-acid biosynthesis; L-histidine biosynthesis; L-histidine from 5-phospho-alpha-D-ribose 1-diphosphate: step 5/9. In terms of biological role, IGPS catalyzes the conversion of PRFAR and glutamine to IGP, AICAR and glutamate. The HisH subunit catalyzes the hydrolysis of glutamine to glutamate and ammonia as part of the synthesis of IGP and AICAR. The resulting ammonia molecule is channeled to the active site of HisF. This Methanosarcina barkeri (strain Fusaro / DSM 804) protein is Imidazole glycerol phosphate synthase subunit HisH.